Here is a 780-residue protein sequence, read N- to C-terminus: Striatin (780 aa).

A coiled-coil region spans residues 53 to 120; it reads LHFLQHEWAR…QERAKYHKLK (68 aa). Residues 55–63 are caveolin-binding; the sequence is FLQHEWARF. Residues 123 to 150 form a disordered region; it reads TELNQGDMKPPSYDSDEGNETEVQPQQN. Ser137 bears the Phosphoserine mark. Positions 149–166 are calmodulin-binding; sequence QNSQLMWKQGRQLLRQYL. At Thr225 the chain carries Phosphothreonine. A phosphoserine mark is found at Ser227, Ser229, Ser245, and Ser259. Disordered stretches follow at residues 289–312, 334–353, and 364–392; these read DFLVTSEEGDNESRSAGDGTDWEK, EQYKKERKGKKGVKRPNRSK, and VDELPSLQPSVGSPSRPSSSRLPEQELSR. Residues 299 to 312 are compositionally biased toward basic and acidic residues; that stretch reads NESRSAGDGTDWEK. Residues 338–351 are compositionally biased toward basic residues; sequence KERKGKKGVKRPNR. WD repeat units lie at residues 461–500, 514–553, 567–606, 662–701, 704–743, and 750–780; these read SHFDGIRALAFHPIEPVLITASEDHTLKMWNLQKTAPAKK, AHKGPVLCVVMSSNGEQCYSGGTDGRIQSWSTTNPNVDPY, GHTDAVWGLAYSAAHQRLLSCSADGTLRLWNTTEVAPALS, SSSCQINRVISHPTLPISITAHEDRHIKFYDNNTGKLIHS, AHLEAVTSLAVDPNGLYLMSGSHDCSIRLWNLESKTCIQE, and KFEESIHDVAFHPSKCYIASAGADALAKVFV.

The protein belongs to the WD repeat striatin family. Part of the core of STRIPAK complexes composed of PP2A catalytic and scaffolding subunits, the striatins (PP2A regulatory subunits), the striatin-associated proteins MOB4, STRIP1 and STRIP2, PDCD10 and members of the STE20 kinases, such as STK24 and STK26. Interacts with CTTNBP2; this interaction may regulate dendritic spine distribution of STRN. Activation of glutamate receptors weakens the interaction with CTTNBP2. Mainly expressed in brain but is also expressed at low levels in various tissues such as kidney, spleen, skeletal muscle and lung.

It is found in the cytoplasm. The protein localises to the membrane. It localises to the cell projection. The protein resides in the dendritic spine. Calmodulin-binding scaffolding protein which is the center of the striatin-interacting phosphatase and kinase (STRIPAK) complexes. STRIPAK complexes have critical roles in protein (de)phosphorylation and are regulators of multiple signaling pathways including Hippo, MAPK, nuclear receptor and cytoskeleton remodeling. Different types of STRIPAK complexes are involved in a variety of biological processes such as cell growth, differentiation, apoptosis, metabolism and immune regulation. The chain is Striatin (Strn) from Mus musculus (Mouse).